The chain runs to 244 residues: Thiol S-methyltransferase TMT1B (244 aa).

The N-terminal stretch at 1 to 23 (MDILVPLLQLLVLLLTLPLHLMA) is a signal peptide.

The protein belongs to the methyltransferase superfamily. Expressed in the liver.

It is found in the endoplasmic reticulum membrane. It localises to the lipid droplet. The protein resides in the microsome. Its subcellular location is the cytoplasm. The protein localises to the cytosol. It carries out the reaction a thiol + S-adenosyl-L-methionine = a methyl thioether + S-adenosyl-L-homocysteine + H(+). Functionally, thiol S-methyltransferase that catalyzes the transfer of a methyl group from S-adenosyl-L-methionine to alkyl and phenolic thiol-containing acceptor substrates. Together with TMT1B accounts for most of S-thiol methylation activity in the endoplasmic reticulum of hepatocytes. Selectively methylates S-centered nucleophiles from metabolites such as hydrogen sulfide and dithiothreitol. The sequence is that of Thiol S-methyltransferase TMT1B from Homo sapiens (Human).